Here is a 376-residue protein sequence, read N- to C-terminus: Queuine tRNA-ribosyltransferase (376 aa).

The Proton acceptor role is filled by aspartate 89. Substrate contacts are provided by residues 89–93 (DSGGF), aspartate 143, glutamine 194, and glycine 221. The tract at residues 252-258 (GVGIPSN) is RNA binding. The active-site Nucleophile is the aspartate 271. The segment at 276–280 (ARNGR) is RNA binding; important for wobble base 34 recognition. The Zn(2+) site is built by cysteine 309, cysteine 311, cysteine 314, and histidine 340.

This sequence belongs to the queuine tRNA-ribosyltransferase family. As to quaternary structure, homodimer. Within each dimer, one monomer is responsible for RNA recognition and catalysis, while the other monomer binds to the replacement base PreQ1. It depends on Zn(2+) as a cofactor.

The catalysed reaction is 7-aminomethyl-7-carbaguanine + guanosine(34) in tRNA = 7-aminomethyl-7-carbaguanosine(34) in tRNA + guanine. Its pathway is tRNA modification; tRNA-queuosine biosynthesis. Its function is as follows. Catalyzes the base-exchange of a guanine (G) residue with the queuine precursor 7-aminomethyl-7-deazaguanine (PreQ1) at position 34 (anticodon wobble position) in tRNAs with GU(N) anticodons (tRNA-Asp, -Asn, -His and -Tyr). Catalysis occurs through a double-displacement mechanism. The nucleophile active site attacks the C1' of nucleotide 34 to detach the guanine base from the RNA, forming a covalent enzyme-RNA intermediate. The proton acceptor active site deprotonates the incoming PreQ1, allowing a nucleophilic attack on the C1' of the ribose to form the product. After dissociation, two additional enzymatic reactions on the tRNA convert PreQ1 to queuine (Q), resulting in the hypermodified nucleoside queuosine (7-(((4,5-cis-dihydroxy-2-cyclopenten-1-yl)amino)methyl)-7-deazaguanosine). The sequence is that of Queuine tRNA-ribosyltransferase from Clostridium botulinum (strain Okra / Type B1).